A 252-amino-acid chain; its full sequence is tRNA (guanine-N(7)-)-methyltransferase (252 aa).

S-adenosyl-L-methionine-binding residues include glutamate 75, glutamate 100, aspartate 127, and aspartate 150. Residue aspartate 150 is part of the active site. Lysine 154 serves as a coordination point for substrate. Positions 156–161 (RHNKRR) are interaction with RNA. Substrate contacts are provided by residues aspartate 186 and 223–226 (THFE).

This sequence belongs to the class I-like SAM-binding methyltransferase superfamily. TrmB family.

It carries out the reaction guanosine(46) in tRNA + S-adenosyl-L-methionine = N(7)-methylguanosine(46) in tRNA + S-adenosyl-L-homocysteine. The protein operates within tRNA modification; N(7)-methylguanine-tRNA biosynthesis. In terms of biological role, catalyzes the formation of N(7)-methylguanine at position 46 (m7G46) in tRNA. This is tRNA (guanine-N(7)-)-methyltransferase from Xanthomonas oryzae pv. oryzae (strain MAFF 311018).